Reading from the N-terminus, the 106-residue chain is Small ribosomal subunit protein uS10 (106 aa).

The protein belongs to the universal ribosomal protein uS10 family. In terms of assembly, part of the 30S ribosomal subunit.

Its function is as follows. Involved in the binding of tRNA to the ribosomes. The sequence is that of Small ribosomal subunit protein uS10 from Caldicellulosiruptor saccharolyticus (strain ATCC 43494 / DSM 8903 / Tp8T 6331).